Here is an 856-residue protein sequence, read N- to C-terminus: Dynamin-1 (856 aa).

Residues 28 to 294 (DLDLPQIAVV…LTNHIRDTLP (267 aa)) form the Dynamin-type G domain. The G1 motif stretch occupies residues 38–45 (GGQSAGKS). Residues S41, G43, K44, S45, S46, R59, and G60 each contribute to the GDP site. The tract at residues 64-66 (VTR) is G2 motif. Y80 bears the Phosphotyrosine mark. Y125 is modified (3'-nitrotyrosine; alternate). Phosphotyrosine; alternate is present on Y125. Residues 136-139 (DLPG) form a G3 motif region. A G4 motif region spans residues 205 to 208 (TKLD). Positions 206, 208, 211, 236, 237, and 239 each coordinate GDP. The tract at residues 235-238 (VNRS) is G5 motif. Phosphoserine is present on residues S306 and S347. Y354 carries the post-translational modification Phosphotyrosine. S512 carries the post-translational modification Phosphoserine. Residues 519-625 (LVIRKGWLTI…WKASFLRAGV (107 aa)) enclose the PH domain. The region spanning 659 to 750 (VETIRNLVDS…IIGDINTTTV (92 aa)) is the GED domain. Residues 750–856 (VSTPMPPPVD…PIGSGKSIPS (107 aa)) form a disordered region. Residues 763 to 781 (LQVQSVPTGRRSPTSSPTP) are compositionally biased toward polar residues. Phosphoserine occurs at positions 774 and 778. R796 carries the omega-N-methylarginine modification. The residue at position 822 (S822) is a Phosphoserine. A compositionally biased stretch (pro residues) spans 825-844 (PFGPPPQVPSRPNRAPPGVP).

This sequence belongs to the TRAFAC class dynamin-like GTPase superfamily. Dynamin/Fzo/YdjA family. Homodimer; homodimerization is mediated by the dynamin-type G domain which promotes assembly-stimulated GTPase activity. Homo-tetramer formed from two dimers in the absence of lipid. Oligomerizes into a helical polymer that self-assembles around the vesicle membrane, when associated to the menbrane through lipid binding. Interacts (via C-terminal proline-rich domain (PRD)) with SNX9 (via SH3 domain); this interaction allows regulation of DNM1 self-assembly during late stages of endocytic vesicle formation and supports DNM1's early functions in accelerating clathrin-coated pits (CCPs) maturation in non neuronals cell. Interacts (via C-terminal proline-rich domain (PRD)) with MYO1E (via SH3 domain); this interaction regulates receptor-mediated endocytosis. Interacts with SNX33 (via SH3 domain); this interaction decreases DNM1-dependent endocytosis. Interacts with DIAPH1. Interacts with GRB2 (via SH3 domain); this interaction mediates disassembly of DNM1 polymers, therefore modulates self-assembly. Forms a complex with BIN1 (via SH3 domain) and SH3GL2 (via SH3 domain). Forms a complex with SH3GL2 (via SH3 domain) and AMPH (via SH3 domain). Forms a complex with SH3GL2 (via SH3 domain) and SYNJ1. Interacts with AMPH. Interacts (via C-terminal proline-rich domain (PRD)) with SYT1; this interaction facilitates vesicle fission during clathrin-mediated endocytosis (CME). Interacts (via C-terminal proline-rich domain (PRD)) with PLCG1 (via SH3 domain); this interaction stimulates the release of GDP from DNM1 and enhances DNM1-dependent endocytosis. Interacts with SNPH; this interaction inhibits the binding of DNM1 to AMPH and DNM1-receptor-mediated endocytosis. Interacts with CAV1. Interacts with SH3GLB1 (via SH3 domain). Interacts with PACSIN1 (via SH3 domain), PACSIN2 (via SH3 domain) and PACSIN3 (via SH3 domain). Interacts with UNC119; this interaction decreases DNM1's GTPase activity and affects DNM1's interaction with AMPH. Interacts with AMPH. Interacts (GTP-bound form) with DNAJC6; this interaction allows clathrin-coated vesicle (CCV) formation at the plasma membrane. Post-translationally, phosphorylation at Ser-774 by GSK3B/GSK3-beta leads to inactivation of receptor-mediated endocytosis in non-neuronal cells. Dephosphorylation at Ser-774, through the EGFR downstream signaling, leads to activation and regulates early stages of clathrin-mediated endocytosis (CME).

The protein resides in the cell membrane. It localises to the membrane. It is found in the clathrin-coated pit. The protein localises to the cytoplasmic vesicle. Its subcellular location is the presynapse. The protein resides in the secretory vesicle. It localises to the chromaffin granule. The catalysed reaction is GTP + H2O = GDP + phosphate + H(+). Functionally, catalyzes the hydrolysis of GTP and utilizes this energy to mediate vesicle scission and participates in many forms of endocytosis, such as clathrin-mediated endocytosis or synaptic vesicle endocytosis as well as rapid endocytosis (RE). Associates to the membrane, through lipid binding, and self-assembles into rings and stacks of interconnected rings through oligomerization to form a helical polymer around the vesicle membrane leading to constriction of invaginated coated pits around their necks. Self-assembly of the helical polymer induces membrane tubules narrowing until the polymer reaches a length sufficient to trigger GTP hydrolysis. Depending on the curvature imposed on the tubules, membrane detachment from the helical polymer upon GTP hydrolysis can cause spontaneous hemifission followed by complete fission. May play a role in regulating early stages of clathrin-mediated endocytosis in non-neuronal cells through its activation by dephosphorylation via the signaling downstream of EGFR. Controls vesicle size at a step before fission, during formation of membrane pits, at hippocampal synapses. Controls plastic adaptation of the synaptic vesicle recycling machinery to high levels of activity. Mediates rapid endocytosis (RE), a Ca(2+)-dependent and clathrin- and K(+)-independent process in chromaffin cells. Microtubule-associated force-producing protein involved in producing microtubule bundles and able to bind and hydrolyze GTP. Through its interaction with DNAJC6, acts during the early steps of clathrin-coated vesicle (CCV) formation. This Bos taurus (Bovine) protein is Dynamin-1.